The sequence spans 386 residues: Bifunctional enzyme IspD/IspF (386 aa).

Residues 1–231 form a 2-C-methyl-D-erythritol 4-phosphate cytidylyltransferase region; the sequence is MKNGAVIIPA…REKKEPMQKI (231 aa). Residues 232–386 form a 2-C-methyl-D-erythritol 2,4-cyclodiphosphate synthase region; it reads RIGHGFDAHQ…SCHAVVLLQQ (155 aa). A divalent metal cation is bound by residues Asp238 and His240. 4-CDP-2-C-methyl-D-erythritol 2-phosphate-binding positions include 238–240 and 264–265; these read DAH and HS. Residue His272 participates in a divalent metal cation binding. Residues 286–288, 362–365, Tyr369, and Arg372 contribute to the 4-CDP-2-C-methyl-D-erythritol 2-phosphate site; these read DIG and TTTE.

In the N-terminal section; belongs to the IspD/TarI cytidylyltransferase family. IspD subfamily. It in the C-terminal section; belongs to the IspF family. It depends on a divalent metal cation as a cofactor.

It catalyses the reaction 2-C-methyl-D-erythritol 4-phosphate + CTP + H(+) = 4-CDP-2-C-methyl-D-erythritol + diphosphate. The enzyme catalyses 4-CDP-2-C-methyl-D-erythritol 2-phosphate = 2-C-methyl-D-erythritol 2,4-cyclic diphosphate + CMP. It participates in isoprenoid biosynthesis; isopentenyl diphosphate biosynthesis via DXP pathway; isopentenyl diphosphate from 1-deoxy-D-xylulose 5-phosphate: step 2/6. Its pathway is isoprenoid biosynthesis; isopentenyl diphosphate biosynthesis via DXP pathway; isopentenyl diphosphate from 1-deoxy-D-xylulose 5-phosphate: step 4/6. In terms of biological role, bifunctional enzyme that catalyzes the formation of 4-diphosphocytidyl-2-C-methyl-D-erythritol from CTP and 2-C-methyl-D-erythritol 4-phosphate (MEP) (IspD), and catalyzes the conversion of 4-diphosphocytidyl-2-C-methyl-D-erythritol 2-phosphate (CDP-ME2P) to 2-C-methyl-D-erythritol 2,4-cyclodiphosphate (ME-CPP) with a corresponding release of cytidine 5-monophosphate (CMP) (IspF). The chain is Bifunctional enzyme IspD/IspF from Desulfotalea psychrophila (strain LSv54 / DSM 12343).